Here is a 629-residue protein sequence, read N- to C-terminus: tRNA uridine 5-carboxymethylaminomethyl modification enzyme MnmG (629 aa).

FAD is bound at residue 14–19 (GAGHAG). Position 274-288 (274-288 (GPRYCPSIEDKVVRF)) interacts with NAD(+).

This sequence belongs to the MnmG family. As to quaternary structure, homodimer. Heterotetramer of two MnmE and two MnmG subunits. It depends on FAD as a cofactor.

It localises to the cytoplasm. Functionally, NAD-binding protein involved in the addition of a carboxymethylaminomethyl (cmnm) group at the wobble position (U34) of certain tRNAs, forming tRNA-cmnm(5)s(2)U34. The sequence is that of tRNA uridine 5-carboxymethylaminomethyl modification enzyme MnmG from Xylella fastidiosa (strain Temecula1 / ATCC 700964).